A 350-amino-acid polypeptide reads, in one-letter code: MAKELADKAKEAFVDDDFDVAVDLYSKAIDLDPNCAEFFADRAQAYIKLESFTEAVADANKAIELDPSLTKAYLRKGTACMKLEEYRTAKTALEKGASITPSESKFKKLIDECNFLITEEEKDLVQPVPSTLPSSVTAPPVSELDVTPTAKYRHEYYQKPEEVVVTVFAKGIPKQNVNIDFGEQILSVVIEVPGEDAYYLQPRLFGKIIPDKCKYEVLSTKIEICLAKADIITWASLEHGKGPAVLPKPNVSSEVSQRPAYPSSKKVKDWDKLEAEVKKQEKDEKLEGDAALNKFFREIYQNADEDMRRAMSKSFVESNGTVLSTNWQEVGTKTIESTPPDGMELKKWEI.

TPR repeat units lie at residues 2-35, 37-69, and 71-103; these read AKEL…DPNC, EFFA…DPSL, and KAYL…TPSE. The CS domain occupies 149–238; sequence TAKYRHEYYQ…ADIITWASLE (90 aa). In terms of domain architecture, SGS spans 260–350; sequence AYPSSKKVKD…DGMELKKWEI (91 aa).

It belongs to the SGT1 family. As to quaternary structure, interacts with RAR1. Forms a ternary complex with RAR1 and barley HSP90.

In terms of biological role, functions in R gene-mediated resistance, but participates in a lower extent than SGT1B to RPP5-mediated resistance. Not required for RPM1, RPS2, RPS4 and RPS5-mediated resistance. Probably required for SCF-mediated ubiquitination, by coupling HSP90 to SCF complex for ubiquitination of HSP90 client proteins. The protein is Protein SGT1 homolog A (SGT1A) of Arabidopsis thaliana (Mouse-ear cress).